The primary structure comprises 70 residues: Ranatuerin-2SN1 (70 aa).

Positions 1–22 (MFTLKKSLLLIFFLGTISLSLC) are cleaved as a signal peptide. Residues 23 to 40 (EKERDADDDEVEVIKQEE) constitute a propeptide, removed in mature form. The cysteines at positions 65 and 70 are disulfide-linked.

The protein belongs to the frog skin active peptide (FSAP) family. Ranatuerin subfamily. Expressed by the skin glands.

The protein resides in the secreted. Its function is as follows. Antimicrobial peptide. Weakly active against P.faecalis X29. Not active against fungi. Shows very weak hemolytic activity against human erythrocytes. This chain is Ranatuerin-2SN1, found in Sylvirana spinulosa (Fine-spined frog).